A 594-amino-acid chain; its full sequence is UvrABC system protein C (594 aa).

Residues 13 to 99 (NSSGVYQYFD…IKQLKPKYNI (87 aa)) form the GIY-YIG domain. The 36-residue stretch at 205–240 (DRLIKELELKMERLSSKLRFEEALIYRDRIAKIQKI) folds into the UVR domain.

The protein belongs to the UvrC family. Interacts with UvrB in an incision complex.

Its subcellular location is the cytoplasm. Functionally, the UvrABC repair system catalyzes the recognition and processing of DNA lesions. UvrC both incises the 5' and 3' sides of the lesion. The N-terminal half is responsible for the 3' incision and the C-terminal half is responsible for the 5' incision. The chain is UvrABC system protein C from Helicobacter pylori (strain P12).